A 373-amino-acid polypeptide reads, in one-letter code: Glutamine synthetase (373 aa).

Position 2 is an N-acetylalanine (A2). Positions 2–25 (ATSASSHLNKGIKQVYMSLPQGEK) are required for glutamine-induced ubiquitination by CRL4(CRBN) and proteasomal degradation. 2 positions are modified to N6-acetyllysine: K11 and K14. A GS beta-grasp domain is found at 24–106 (EKVQAMYIWI…VFCEVFKYNR (83 aa)). Position 104 is a phosphotyrosine (Y104). The GS catalytic domain maps to 113-373 (LRHTCKRIMD…TGDEPFQYKN (261 aa)). E134 contacts ATP. Positions 134, 136, 196, and 203 each coordinate Mn(2+). 203 to 208 (EFQIGP) lines the ATP pocket. L-glutamate is bound at residue 246-247 (NW). H253 is a binding site for Mn(2+). Residues 255–257 (NFS), R319, and R324 each bind ATP. R319 lines the L-glutamate pocket. Residue 336-338 (YFE) participates in ADP binding. Residue E338 participates in Mn(2+) binding. R340 is an L-glutamate binding site. S343 is modified (phosphoserine).

The protein belongs to the glutamine synthetase family. As to quaternary structure, decamer; composed of two pentamers. Interacts with PALMD. Interacts with RHOJ. Interacts with BEST2; this interaction tethers a fraction of GLUL to the membrane, causing a decrease of cytosolic glutamine synthase (GS) activity and inhibits the chloride channel activity of BEST2 by affecting the gating at the aperture in the absence of intracellular glutamate. Mg(2+) serves as cofactor. Mn(2+) is required as a cofactor. Post-translationally, palmitoylated; undergoes autopalmitoylation. In terms of processing, acetylated by EP300/p300; acetylation is stimulated by increased glutamine levels and promotes ubiquitin-mediated proteasomal degradation. Ubiquitinated by ZNRF1. Ubiquitinated by the DCX (DDB1-CUL4-X-box) E3 ubiquitin-protein ligase complex called CRL4(CRBN), leading to proteasomal degradation.

Its subcellular location is the cytoplasm. The protein resides in the cytosol. It localises to the microsome. The protein localises to the mitochondrion. It is found in the cell membrane. The catalysed reaction is L-glutamate + NH4(+) + ATP = L-glutamine + ADP + phosphate + H(+). The enzyme catalyses L-cysteinyl-[protein] + hexadecanoyl-CoA = S-hexadecanoyl-L-cysteinyl-[protein] + CoA. Glutamine synthetase activity is inhibited by methionine sulfoximine (MSO). Functionally, glutamine synthetase that catalyzes the ATP-dependent conversion of glutamate and ammonia to glutamine. Its role depends on tissue localization: in the brain, it regulates the levels of toxic ammonia and converts neurotoxic glutamate to harmless glutamine, whereas in the liver, it is one of the enzymes responsible for the removal of ammonia. Plays a key role in ammonium detoxification during erythropoiesis: the glutamine synthetase activity is required to remove ammonium generated by porphobilinogen deaminase (HMBS) during heme biosynthesis to prevent ammonium accumulation and oxidative stress. Essential for proliferation of fetal skin fibroblasts. Independently of its glutamine synthetase activity, required for endothelial cell migration during vascular development. Involved in angiogenesis by regulating membrane localization and activation of the GTPase RHOJ, possibly by promoting RHOJ palmitoylation. May act as a palmitoyltransferase for RHOJ: able to autopalmitoylate and then transfer the palmitoyl group to RHOJ. Plays a role in ribosomal 40S subunit biogenesis. Through the interaction with BEST2, inhibits BEST2 channel activity by affecting the gating at the aperture in the absence of intracellular L-glutamate, but sensitizes BEST2 to intracellular L-glutamate, which promotes the opening of BEST2 and thus relieves its inhibitory effect on BEST2. This chain is Glutamine synthetase, found in Canis lupus familiaris (Dog).